Reading from the N-terminus, the 194-residue chain is Translation machinery-associated protein 22 (194 aa).

The 72-residue stretch at 102–173 (VQIKRVERNK…DVKEWLLELY (72 aa)) folds into the SUI1 domain.

Belongs to the DENR family. Interacts with the 40S ribosomal subunit.

Its subcellular location is the cytoplasm. The protein is Translation machinery-associated protein 22 (tma22) of Aspergillus fumigatus (strain ATCC MYA-4609 / CBS 101355 / FGSC A1100 / Af293) (Neosartorya fumigata).